The primary structure comprises 198 residues: Glycerol-3-phosphate acyltransferase (198 aa).

5 helical membrane-spanning segments follow: residues 2–22 (YAVL…AYIL), 48–70 (LGYK…AVLI), 75–97 (MGNT…PVFL), 111–131 (VVMT…VTVI), and 154–174 (IFWN…LAIF).

Belongs to the PlsY family. As to quaternary structure, probably interacts with PlsX.

Its subcellular location is the cell membrane. It catalyses the reaction an acyl phosphate + sn-glycerol 3-phosphate = a 1-acyl-sn-glycero-3-phosphate + phosphate. It functions in the pathway lipid metabolism; phospholipid metabolism. Catalyzes the transfer of an acyl group from acyl-phosphate (acyl-PO(4)) to glycerol-3-phosphate (G3P) to form lysophosphatidic acid (LPA). This enzyme utilizes acyl-phosphate as fatty acyl donor, but not acyl-CoA or acyl-ACP. The sequence is that of Glycerol-3-phosphate acyltransferase from Thermoanaerobacter pseudethanolicus (strain ATCC 33223 / 39E) (Clostridium thermohydrosulfuricum).